Here is an 85-residue protein sequence, read N- to C-terminus: Small ribosomal subunit protein bS20 (85 aa).

Positions 1 to 25 (MANIKSAIKRAKLSEERRAHNASIK) are disordered.

The protein belongs to the bacterial ribosomal protein bS20 family.

Functionally, binds directly to 16S ribosomal RNA. The sequence is that of Small ribosomal subunit protein bS20 from Bacillus anthracis (strain A0248).